The primary structure comprises 30 residues: Cycloviolacin-O18 (30 aa).

The cyclopeptide (Gly-Asn) cross-link spans 1-30 (GIPCGESCVYIPCTVTALAGCKCKSKVCYN). Disulfide bonds link cysteine 4-cysteine 21, cysteine 8-cysteine 23, and cysteine 13-cysteine 28.

This is a cyclic peptide. As to expression, expressed in leaves, petals and petioles but not in roots and runners (at protein level).

Functionally, probably participates in a plant defense mechanism. The polypeptide is Cycloviolacin-O18 (Viola odorata (Sweet violet)).